The primary structure comprises 150 residues: 3-hydroxyacyl-[acyl-carrier-protein] dehydratase FabZ (150 aa).

Residue His-54 is part of the active site.

It belongs to the thioester dehydratase family. FabZ subfamily.

It localises to the cytoplasm. It carries out the reaction a (3R)-hydroxyacyl-[ACP] = a (2E)-enoyl-[ACP] + H2O. In terms of biological role, involved in unsaturated fatty acids biosynthesis. Catalyzes the dehydration of short chain beta-hydroxyacyl-ACPs and long chain saturated and unsaturated beta-hydroxyacyl-ACPs. In Colwellia psychrerythraea (strain 34H / ATCC BAA-681) (Vibrio psychroerythus), this protein is 3-hydroxyacyl-[acyl-carrier-protein] dehydratase FabZ.